A 502-amino-acid polypeptide reads, in one-letter code: Maturase K (502 aa).

The protein belongs to the intron maturase 2 family. MatK subfamily.

It localises to the plastid. The protein resides in the chloroplast. Functionally, usually encoded in the trnK tRNA gene intron. Probably assists in splicing its own and other chloroplast group II introns. This chain is Maturase K, found in Spiraea cantoniensis (Reeve's meadowsweet).